The following is a 624-amino-acid chain: MKGQETRGFQSEVKQLLHLMIHSLYSNKEIFLRELISNASDAADKLRFRALSNPDLYEGDGELRVRVSFDKDKRTLTISDNGVGMTRDEVIDHLGTIAKSGTKSFLESLGSDQAKDSQLIGQFGVGFYSAFIVADKVTVRTRAAGEKPENGVFWESAGEGEYTVADITKEDRGTEITLHLREGEDEFLDDWRVRSIISKYSDHIALPVEIEKREEKDGETVISWEKINKAQALWTRNKSEITDEEYKEFYKHIAHDFNDPLTWSHNRVEGKQEYTSLLYIPSQAPWDMWNRDHKHGLKLYVQRVFIMDDAEQFMPNYLRFVRGLIDSSDLPLNVSREILQDSTVTRNLRNALTKRVLQMLEKLAKDDAEKYQTFWQQFGLVLKEGPAEDFANQEAIAKLLRFASTYTDSSAQTVSLEDYVSRMKEGQEKIYYITADSYAAAKSSPHLELLRKKGIEVLLLSDRIDEWMMNYLTEFDGKPFQSVSKVDESLEKLADEVDESAKEAEKALTPFIDRVKALLGERVKDVRLTHRLTDTPAIVSTDADEMSTQMAKLFAAAGQKVPEVKYIFELNPDHVLVKRAADTEDEAKFSEWVELLLDQALLAERGTLEDPNLFIRRMNQLLVS.

The a; substrate-binding stretch occupies residues Met1–Arg336. The tract at residues Glu337 to Lys552 is b. Residues Leu553–Ser624 form a c region.

This sequence belongs to the heat shock protein 90 family. Homodimer.

Its subcellular location is the cytoplasm. In terms of biological role, molecular chaperone. Has ATPase activity. The protein is Chaperone protein HtpG of Escherichia coli O139:H28 (strain E24377A / ETEC).